A 379-amino-acid polypeptide reads, in one-letter code: tRNA-specific 2-thiouridylase MnmA (379 aa).

Residues 23–30 and leucine 49 contribute to the ATP site; that span reads AMSGGVDS. The active-site Nucleophile is the cysteine 117. An intrachain disulfide couples cysteine 117 to cysteine 214. Glycine 141 provides a ligand contact to ATP. The segment at 163–165 is interaction with tRNA; it reads RDQ. The active-site Cysteine persulfide intermediate is the cysteine 214.

It belongs to the MnmA/TRMU family.

The protein localises to the cytoplasm. The catalysed reaction is S-sulfanyl-L-cysteinyl-[protein] + uridine(34) in tRNA + AH2 + ATP = 2-thiouridine(34) in tRNA + L-cysteinyl-[protein] + A + AMP + diphosphate + H(+). In terms of biological role, catalyzes the 2-thiolation of uridine at the wobble position (U34) of tRNA, leading to the formation of s(2)U34. The sequence is that of tRNA-specific 2-thiouridylase MnmA from Cereibacter sphaeroides (strain ATCC 17023 / DSM 158 / JCM 6121 / CCUG 31486 / LMG 2827 / NBRC 12203 / NCIMB 8253 / ATH 2.4.1.) (Rhodobacter sphaeroides).